A 373-amino-acid chain; its full sequence is Core trichothecene cluster (CTC) protein 14 (373 aa).

The protein belongs to the TRI14 family.

Functionally, part of the core gene cluster that mediates the biosynthesis of trichothecenes, a very large family of chemically related bicyclic sesquiterpene compounds acting as mycotoxins, including T2-toxin. The biosynthesis of trichothecenes begins with the cyclization of farnesyl diphosphate to trichodiene and is catalyzed by the trichodiene synthase TRI5. Trichodiene undergoes a series of oxygenations catalyzed by the cytochrome P450 monooxygenase TRI4. TRI4 controls the addition of four oxygens at C-2, C-3, C-11, and the C-12, C-13-epoxide to form the intermediate isotrichotriol. Isotrichotriol then undergoes a non-enzymatic isomerization and cyclization to form isotrichodermol. During this process, the oxygen at the C-2 position becomes the pyran ring oxygen and the hydroxyl group at C-11 is lost. More complex type A trichothecenes are built by modifying isotrichodermol through a series of paired hydroxylation and acetylation or acylation steps. Isotrichodermol is converted to isotrichodermin by the acetyltransferase TRI101. TRI101 encodes a C-3 transacetylase that acts as a self-protection or resistance factor during biosynthesis and that the presence of a free C-3 hydroxyl group is a key component of Fusarium trichothecene phytotoxicity. A second hydroxyl group is added to C-15 by the trichothecene C-15 hydroxylase TRI11, producing 15-decalonectrin, which is then acetylated by TRI3, producing calonectrin. A third hydroxyl group is added at C-4 by the cytochrome P450 monooxygenase TRI13, converting calonectrin to 3,15-diacetoxyspirpenol, which is subsequently acetylated bythe acetyltransferase TRI7. A fourth hydroxyl group is added to C-8 by the cytochrome P450 monooxygenase TRI1, followed by the addition of an isovaleryl moiety by TRI16. Finally, the acetyl group is removed from the C-3 position by the trichothecene C-3 esterase TRI8 to produce T-2 toxin. This Fusarium sporotrichioides protein is Core trichothecene cluster (CTC) protein 14.